Consider the following 99-residue polypeptide: Pyruvate synthase subunit PorD (99 aa).

4Fe-4S ferredoxin-type domains are found at residues 32–60 (MRPI…IQEG) and 61–91 (GIMK…MRPE). [4Fe-4S] cluster-binding residues include C41, C44, C47, C51, C71, C74, C77, and C81.

As to quaternary structure, heterotetramer of one alpha, one beta, one delta and one gamma chain. It depends on [4Fe-4S] cluster as a cofactor.

In Thermotoga maritima (strain ATCC 43589 / DSM 3109 / JCM 10099 / NBRC 100826 / MSB8), this protein is Pyruvate synthase subunit PorD (porD).